The following is a 256-amino-acid chain: L-tyrosine degradation gene cluster protein hmgX (256 aa).

Belongs to the TTC36 family.

It is found in the cytoplasm. Part of the L-tyrosine degradation gene cluster that mediates the biosynthesis of the brownish pigment pyomelanin as an alternative melanin. The 4-hydroxyphenylpyruvate dioxygenase hppD catalyzes the conversion of 4-hydroxyphenylpyruvate to homogentisic acid (HGA). The protein hmgX is crucial for this conversion and thus, probably functions as an accessory factor to mediate specific activity of hppD. The homogentisate 1,2-dioxygenase hmgA is then involved in the cleavage of the aromatic ring of HGA and its conversion to 4-maleylacetoacetate. When hmgA activity is lowered by the cell wall integrity (CWI) signaling pathway, HGA accumulates and leads to the production of pyomelanin through benzoquinone acetic acid after oxidation and polymerization. On the opposite, in non-stress conditions, both hppD and hmgA activities are balanced and HGA is degraded into 4-maleylacetoacetate. 4-maleylacetoacetate is further converted to 4-fumarylacetoacetate by the maleylacetoacetate isomerase maiA, which is degraded into fumarate and acetoacetate by the fumarylacetoacetase fahA. The protein is L-tyrosine degradation gene cluster protein hmgX of Aspergillus fumigatus (strain ATCC MYA-4609 / CBS 101355 / FGSC A1100 / Af293) (Neosartorya fumigata).